A 241-amino-acid polypeptide reads, in one-letter code: Uridylate kinase (241 aa).

13–16 (KVSG) provides a ligand contact to ATP. A UMP-binding site is contributed by Gly55. 2 residues coordinate ATP: Gly56 and Arg60. Residues Asp75 and 136 to 143 (TGNPFFTT) each bind UMP. ATP is bound by residues Thr163, Gln164, Tyr169, and Asp172.

It belongs to the UMP kinase family. In terms of assembly, homohexamer.

It localises to the cytoplasm. The catalysed reaction is UMP + ATP = UDP + ADP. It participates in pyrimidine metabolism; CTP biosynthesis via de novo pathway; UDP from UMP (UMPK route): step 1/1. Inhibited by UTP. Functionally, catalyzes the reversible phosphorylation of UMP to UDP. In Parvibaculum lavamentivorans (strain DS-1 / DSM 13023 / NCIMB 13966), this protein is Uridylate kinase.